Consider the following 472-residue polypeptide: 3-isopropylmalate dehydratase large subunit (472 aa).

[4Fe-4S] cluster contacts are provided by Cys347, Cys407, and Cys410.

This sequence belongs to the aconitase/IPM isomerase family. LeuC type 1 subfamily. As to quaternary structure, heterodimer of LeuC and LeuD. Requires [4Fe-4S] cluster as cofactor.

It catalyses the reaction (2R,3S)-3-isopropylmalate = (2S)-2-isopropylmalate. Its pathway is amino-acid biosynthesis; L-leucine biosynthesis; L-leucine from 3-methyl-2-oxobutanoate: step 2/4. Its function is as follows. Catalyzes the isomerization between 2-isopropylmalate and 3-isopropylmalate, via the formation of 2-isopropylmaleate. This chain is 3-isopropylmalate dehydratase large subunit, found in Synechococcus sp. (strain WH7803).